We begin with the raw amino-acid sequence, 168 residues long: mRNA stability protein IGO1 (168 aa).

The span at 1-13 shows a compositional bias: low complexity; the sequence is MSNENLSPNSSNP. The disordered stretch occupies residues 1-31; it reads MSNENLSPNSSNPDLTKLNNGESGTIDTSKF. A compositionally biased stretch (polar residues) spans 17-31; it reads KLNNGESGTIDTSKF. Ser-32 and Ser-64 each carry phosphoserine. Positions 125 to 168 are disordered; that stretch reads KEGSISSGPPSSNNGTIGGGSTSSTPVGNHSSSSSSLYTESPIR. Low complexity-rich tracts occupy residues 127–139 and 146–168; these read GSIS…SNNG and TSST…SPIR.

Belongs to the endosulfine family. In terms of assembly, interacts with RIM15, DHH1, PBP1, PBP4 and LSM12. In terms of processing, phosphorylated at Ser-64 by RIM15.

In terms of biological role, required for TORC1 to properly control gene expression and chronological life span. Plays an essential role in initiation of the G0 program by preventing the degradation of specific nutrient-regulated mRNAs via the 5'-3' mRNA decay pathway. This is mRNA stability protein IGO1 (IGO1) from Saccharomyces cerevisiae (strain ATCC 204508 / S288c) (Baker's yeast).